Here is a 159-residue protein sequence, read N- to C-terminus: MNIKIIGVGKLKEKYLKQGIAEYAKRLGTFCKFQIVEVPDEKAPEKLSPAEMEGVKEKEGERILAKIKDKEYVYALAIEGKERSSEEFAKELEDLGTYGTSDITFVIGGSLGLSPEVLKRANTKISFGRFTLPHQLMRMVLAEQIYRGFMINAGRPYHK.

Positions 76 and 108 each coordinate S-adenosyl-L-methionine.

This sequence belongs to the RNA methyltransferase RlmH family. Homodimer.

Its subcellular location is the cytoplasm. It carries out the reaction pseudouridine(1915) in 23S rRNA + S-adenosyl-L-methionine = N(3)-methylpseudouridine(1915) in 23S rRNA + S-adenosyl-L-homocysteine + H(+). In terms of biological role, specifically methylates the pseudouridine at position 1915 (m3Psi1915) in 23S rRNA. The sequence is that of Ribosomal RNA large subunit methyltransferase H from Ligilactobacillus salivarius (strain UCC118) (Lactobacillus salivarius).